The sequence spans 128 residues: MAIPKDMRLKGHRTFNYIHKNSMTYHGKLMTFKVARSNPEILLTHKLTNTSNNFRVAIAISKKVSKKAVERNKLRRILQEWLLTNIQKINNHKPYWLLVNLKFGDFRNDKSKLLEEFQNLMFKSRLIK.

Belongs to the RnpA family. As to quaternary structure, consists of a catalytic RNA component (M1 or rnpB) and a protein subunit.

It catalyses the reaction Endonucleolytic cleavage of RNA, removing 5'-extranucleotides from tRNA precursor.. RNaseP catalyzes the removal of the 5'-leader sequence from pre-tRNA to produce the mature 5'-terminus. It can also cleave other RNA substrates such as 4.5S RNA. The protein component plays an auxiliary but essential role in vivo by binding to the 5'-leader sequence and broadening the substrate specificity of the ribozyme. In Prochlorococcus marinus (strain AS9601), this protein is Ribonuclease P protein component.